Reading from the N-terminus, the 1564-residue chain is Abnormal spindle-like microcephaly-associated protein homolog (1564 aa).

31 consecutive IQ domains span residues 31-60 (YLWA…MLKS), 220-251 (LKKN…VIIQ), 270-299 (TRSA…SVIK), 293-322 (ILTS…ATIK), 366-395 (MRES…AVIS), 389-420 (QRKA…IIIQ), 439-468 (VKKA…AAVK), 462-491 (QSVA…SIIK), 512-541 (AKAA…AAMK), 535-566 (EHQA…LVIQ), 608-639 (QHTC…LLIQ), 658-687 (TKAA…AAIT), 681-712 (CNTA…IIIQ), 731-762 (LKKT…TFIK), 754-785 (MHRA…IVIQ), 804-835 (ILKA…TLIQ), 827-856 (LRIA…ITRT), 877-908 (LRHS…TLIQ), 900-931 (MHIA…IWIQ), 949-980 (LQNA…AFIQ), 972-1003 (MHRA…VVIQ), 1022-1053 (QRYS…ILIQ), 1045-1076 (MYFS…IFIQ), 1095-1126 (LRKA…VLIQ), 1168-1199 (QWHS…IIIQ), 1304-1333 (HTQA…AATR), 1327-1358 (MHLA…VIIQ), 1377-1406 (VQKS…EKMA), 1452-1483 (QSRA…RIQS), 1474-1503 (QKCA…QKRA), and 1500-1531 (QKRA…VVLQ).

The protein localises to the cytoplasm. Its subcellular location is the nucleus. Functionally, probable role in mitotic spindle regulation and coordination of mitotic processes. May have a preferential role in regulating neurogenesis. The protein is Abnormal spindle-like microcephaly-associated protein homolog (ASPM) of Ateles geoffroyi (Black-handed spider monkey).